The sequence spans 344 residues: Phenylalanine--tRNA ligase alpha subunit (344 aa).

E256 is a binding site for Mg(2+).

The protein belongs to the class-II aminoacyl-tRNA synthetase family. Phe-tRNA synthetase alpha subunit type 1 subfamily. In terms of assembly, tetramer of two alpha and two beta subunits. Requires Mg(2+) as cofactor.

It localises to the cytoplasm. The enzyme catalyses tRNA(Phe) + L-phenylalanine + ATP = L-phenylalanyl-tRNA(Phe) + AMP + diphosphate + H(+). The sequence is that of Phenylalanine--tRNA ligase alpha subunit (pheS) from Halalkalibacterium halodurans (strain ATCC BAA-125 / DSM 18197 / FERM 7344 / JCM 9153 / C-125) (Bacillus halodurans).